The sequence spans 147 residues: UPF0178 protein Tgr7_2584 (147 aa).

It belongs to the UPF0178 family.

This is UPF0178 protein Tgr7_2584 from Thioalkalivibrio sulfidiphilus (strain HL-EbGR7).